The sequence spans 747 residues: AMP deaminase 1 (747 aa).

Phosphothreonine is present on Thr81. At Ser85 the chain carries Phosphoserine. Phosphotyrosine is present on Tyr216. Residues His303 and His305 each contribute to the Zn(2+) site. Substrate-binding positions include His305 and Lys374–Tyr379. Ser441 carries the post-translational modification Phosphoserine. His572 serves as a coordination point for Zn(2+). Substrate is bound at residue Glu575. His594 serves as the catalytic Proton acceptor. Asp649 provides a ligand contact to Zn(2+). Residue Asp650–Gln653 coordinates substrate.

This sequence belongs to the metallo-dependent hydrolases superfamily. Adenosine and AMP deaminases family. Homotetramer. Requires Zn(2+) as cofactor.

It catalyses the reaction AMP + H2O + H(+) = IMP + NH4(+). Its pathway is purine metabolism; IMP biosynthesis via salvage pathway; IMP from AMP: step 1/1. Functionally, AMP deaminase plays a critical role in energy metabolism. The chain is AMP deaminase 1 from Rattus norvegicus (Rat).